A 223-amino-acid polypeptide reads, in one-letter code: Translation initiation factor 6 (223 aa).

Belongs to the eIF-6 family.

Its function is as follows. Binds to the 50S ribosomal subunit and prevents its association with the 30S ribosomal subunit to form the 70S initiation complex. This chain is Translation initiation factor 6, found in Sulfurisphaera tokodaii (strain DSM 16993 / JCM 10545 / NBRC 100140 / 7) (Sulfolobus tokodaii).